The primary structure comprises 521 residues: Acetyl-CoA hydrolase (521 aa).

A CoA-binding site is contributed by 276 to 280; sequence GIGNI. Glu-301 acts as the 5-glutamyl coenzyme A thioester intermediate in catalysis. 2 residues coordinate CoA: Asn-391 and Gly-395.

It belongs to the acetyl-CoA hydrolase/transferase family.

The protein resides in the cytoplasm. The enzyme catalyses acetyl-CoA + H2O = acetate + CoA + H(+). Presumably involved in regulating the intracellular acetyl-CoA pool for fatty acid and cholesterol synthesis and fatty acid oxidation. This chain is Acetyl-CoA hydrolase (ach1), found in Schizosaccharomyces pombe (strain 972 / ATCC 24843) (Fission yeast).